Reading from the N-terminus, the 908-residue chain is MAQSSTQQRGRTPLMRQYYKIKERHPKAILLFRMGDFYESFDDDAKTVSRLLGITLTERNNGDADDVPMAGFPHHALDSHLPKLIRSGLRVAICEQVEDADDSSGKVVDRDVVEVVTPGVSFHDQLLNPKQSNFLAALHFGTGRDKDRIGFSFIDATTGEFSVTEAGLDQLQDLIQTVAPSEVIVDKRKTERLQQHLREVPFTVTEQEDWVFKYDFAYQTLLEHFETHSLKGFGVDDMDLGVVASGAALHYLGETQKGALPHVRKIKRYSKDEHIALDPETKRNLELVQSIQDDGHEGTLVSILDETETPMGGRRLRAWLVRPLRDVGRIRHRLDAVEACVDDRTLRDDLREELNQMGDLERLAGKVATGRAAPGDLIAIKHTLRRLPNVLGLLTDADSDALGAIEDDLRSCPEMVDRIQSALVDDPPAKISEGGLIRDGYSEELDELRTIAQEGKDWVANLETEESERTDIPSLKVGFNKVFGYYIEVTNTHADKVPEDYIRKQTLVDSERYVTPELKEMEEKILTAEEKIETLEQELFNELRSQIAQQTGILQENAELLAHLDCFAGLAEVAEQHDYTRPSVDDGLTIDIEEGRHPVVEQTLPPGDPFIPNDMALDPDDEQVLIITGPNMAGKSVALRQVGLIVLLAQVGSFVPAEAAQIGVVDRIFTRVGASDNLAAGESTFLVEMNEAANILNNATARSLILFDEVGRGTSTFDGLSIAWAIVEYLHERPEVAARTLFATHYHELNAMADRLERVHNYRIQVSEHEGEIVFLRKLIPGGADHSYGIEVAKMAGLPDAVIARAREVLQNLESQHLEVGADEADGAPSEDPPSEDPPSGDGVRAKKGEADAVPDLEDSQANQMHLFGQPDPAAEEIKEMLGEIDPNRITPVEALMKLAEMKETLAD.

Residue 629–636 (GPNMAGKS) participates in ATP binding. The disordered stretch occupies residues 822–863 (ADEADGAPSEDPPSEDPPSGDGVRAKKGEADAVPDLEDSQAN).

This sequence belongs to the DNA mismatch repair MutS family.

Its function is as follows. This protein is involved in the repair of mismatches in DNA. It is possible that it carries out the mismatch recognition step. This protein has a weak ATPase activity. In Salinibacter ruber (strain DSM 13855 / M31), this protein is DNA mismatch repair protein MutS.